The sequence spans 103 residues: Large ribosomal subunit protein P2 (103 aa).

Residues 64–103 (LAISSSQKSEPAQPADTAESTQATENKEEEDEDFDIFAAF) are disordered. A compositionally biased stretch (acidic residues) spans 90–103 (KEEEDEDFDIFAAF).

This sequence belongs to the eukaryotic ribosomal protein P1/P2 family. Component of the large ribosomal subunit.

The protein localises to the cytoplasm. Plays an important role in the elongation step of protein synthesis. The sequence is that of Large ribosomal subunit protein P2 (RPP2A) from Encephalitozoon cuniculi (strain GB-M1) (Microsporidian parasite).